The following is a 566-amino-acid chain: Oxygen-dependent choline dehydrogenase (566 aa).

Position 7-36 (7-36 (DYIICGAGSAGNVLATRLTEDPDVTVLLLE)) interacts with FAD. A disordered region spans residues 180–202 (NGYQQEGFGPMDRTVTPKGRRAS). The active-site Proton acceptor is H474.

The protein belongs to the GMC oxidoreductase family. FAD serves as cofactor.

The catalysed reaction is choline + A = betaine aldehyde + AH2. The enzyme catalyses betaine aldehyde + NAD(+) + H2O = glycine betaine + NADH + 2 H(+). The protein operates within amine and polyamine biosynthesis; betaine biosynthesis via choline pathway; betaine aldehyde from choline (cytochrome c reductase route): step 1/1. In terms of biological role, involved in the biosynthesis of the osmoprotectant glycine betaine. Catalyzes the oxidation of choline to betaine aldehyde and betaine aldehyde to glycine betaine at the same rate. The sequence is that of Oxygen-dependent choline dehydrogenase from Burkholderia orbicola (strain MC0-3).